A 213-amino-acid polypeptide reads, in one-letter code: Orotate phosphoribosyltransferase (213 aa).

Residue lysine 26 participates in 5-phospho-alpha-D-ribose 1-diphosphate binding. Residue 34-35 participates in orotate binding; it reads FF. 5-phospho-alpha-D-ribose 1-diphosphate contacts are provided by residues 72–73, arginine 99, lysine 100, lysine 103, histidine 105, and 124–132; these read YK and DDVITAGTA. The orotate site is built by threonine 128 and arginine 156.

It belongs to the purine/pyrimidine phosphoribosyltransferase family. PyrE subfamily. In terms of assembly, homodimer. Mg(2+) serves as cofactor.

It catalyses the reaction orotidine 5'-phosphate + diphosphate = orotate + 5-phospho-alpha-D-ribose 1-diphosphate. It functions in the pathway pyrimidine metabolism; UMP biosynthesis via de novo pathway; UMP from orotate: step 1/2. Its function is as follows. Catalyzes the transfer of a ribosyl phosphate group from 5-phosphoribose 1-diphosphate to orotate, leading to the formation of orotidine monophosphate (OMP). This is Orotate phosphoribosyltransferase from Enterobacter sp. (strain 638).